Reading from the N-terminus, the 1265-residue chain is 1-phosphatidylinositol 4,5-bisphosphate phosphodiesterase gamma-2 (1265 aa).

One can recognise a PH domain in the interval 20 to 131; it reads RALELGTVMT…WLSGLKILHQ (112 aa). The PI-PLC X-box domain maps to 312–456; it reads QDMNNPLSHY…LREKIIIKHK (145 aa). Active-site residues include histidine 327 and histidine 372. SH2 domains are found at residues 532–635 and 646–735; these read WFHK…TDPV and WYYD…RYPV. A phosphotyrosine; by BTK mark is found at tyrosine 753 and tyrosine 759. The SH3 domain occupies 769-829; the sequence is MPQRTVKALY…PSNYVEDISA (61 aa). The PI-PLC Y-box domain occupies 930–1044; the sequence is LSDLVVYCKP…GYVLQPESMR (115 aa). Residues 1038-1169 form the C2 domain; sequence LQPESMRSEK…SGFRSVPLKN (132 aa). At tyrosine 1197 the chain carries Phosphotyrosine; by BTK. Phosphotyrosine is present on residues tyrosine 1217 and tyrosine 1245.

As to quaternary structure, part of a complex composed of EEIG1, TNFRSF11A/RANK, PLCG2, GAB2, TEC and BTK; complex formation increases in the presence of TNFSF11/RANKL. Interacts (via SH2 domain) with CSF1R (tyrosine phosphorylated). Interacts constitutively with THEMIS2. Requires Ca(2+) as cofactor. Post-translationally, phosphorylated on tyrosine residues by CSF1R. Phosphorylated on tyrosine residues by BTK and SYK; upon ligand-induced activation of a variety of growth factor receptors and immune system receptors. Phosphorylation leads to increased phospholipase activity.

It localises to the membrane raft. It catalyses the reaction a 1,2-diacyl-sn-glycero-3-phospho-(1D-myo-inositol-4,5-bisphosphate) + H2O = 1D-myo-inositol 1,4,5-trisphosphate + a 1,2-diacyl-sn-glycerol + H(+). Its function is as follows. The production of the second messenger molecules diacylglycerol (DAG) and inositol 1,4,5-trisphosphate (IP3) is mediated by activated phosphatidylinositol-specific phospholipase C enzymes. It is a crucial enzyme in transmembrane signaling. The chain is 1-phosphatidylinositol 4,5-bisphosphate phosphodiesterase gamma-2 from Rattus norvegicus (Rat).